The following is an 88-amino-acid chain: Apolipoprotein C-I (88 aa).

Residues 1 to 26 (MRLFLSLPVLVVVLAMVLEGPAPAQA) form the signal peptide.

This sequence belongs to the apolipoprotein C1 family.

Its subcellular location is the secreted. In terms of biological role, inhibitor of lipoprotein binding to the low density lipoprotein (LDL) receptor, LDL receptor-related protein, and very low density lipoprotein (VLDL) receptor. Associates with high density lipoproteins (HDL) and the triacylglycerol-rich lipoproteins in the plasma and makes up about 10% of the protein of the VLDL and 2% of that of HDL. Appears to interfere directly with fatty acid uptake and is also the major plasma inhibitor of cholesteryl ester transfer protein (CETP). Binds free fatty acids and reduces their intracellular esterification. Modulates the interaction of APOE with beta-migrating VLDL and inhibits binding of beta-VLDL to the LDL receptor-related protein. The sequence is that of Apolipoprotein C-I (APOC1) from Ailurus fulgens (Himalayan red panda).